Reading from the N-terminus, the 402-residue chain is Probable 2,3-bisphosphoglycerate-independent phosphoglycerate mutase (402 aa).

The protein belongs to the BPG-independent phosphoglycerate mutase family. A-PGAM subfamily.

It carries out the reaction (2R)-2-phosphoglycerate = (2R)-3-phosphoglycerate. It functions in the pathway carbohydrate degradation; glycolysis; pyruvate from D-glyceraldehyde 3-phosphate: step 3/5. Catalyzes the interconversion of 2-phosphoglycerate and 3-phosphoglycerate. This is Probable 2,3-bisphosphoglycerate-independent phosphoglycerate mutase from Thermosipho africanus (strain TCF52B).